The sequence spans 376 residues: Protein-glutamate methylesterase/protein-glutamine glutaminase (376 aa).

A Response regulatory domain is found at 5–122 (KVLIVDDSAL…QHTFEDYTDE (118 aa)). Position 56 is a 4-aspartylphosphate (Asp56). In terms of domain architecture, CheB-type methylesterase spans 185 to 376 (SKPSHKVIAL…PEKILALIKK (192 aa)). Catalysis depends on residues Ser197, His223, and Asp319.

It belongs to the CheB family. In terms of processing, phosphorylated by CheA. Phosphorylation of the N-terminal regulatory domain activates the methylesterase activity.

The protein resides in the cytoplasm. The enzyme catalyses [protein]-L-glutamate 5-O-methyl ester + H2O = L-glutamyl-[protein] + methanol + H(+). It carries out the reaction L-glutaminyl-[protein] + H2O = L-glutamyl-[protein] + NH4(+). Involved in chemotaxis. Part of a chemotaxis signal transduction system that modulates chemotaxis in response to various stimuli. Catalyzes the demethylation of specific methylglutamate residues introduced into the chemoreceptors (methyl-accepting chemotaxis proteins or MCP) by CheR. Also mediates the irreversible deamidation of specific glutamine residues to glutamic acid. The protein is Protein-glutamate methylesterase/protein-glutamine glutaminase of Hydrogenovibrio crunogenus (strain DSM 25203 / XCL-2) (Thiomicrospira crunogena).